A 1287-amino-acid chain; its full sequence is DNA-directed RNA polymerase subunit beta (1287 aa).

Belongs to the RNA polymerase beta chain family. In terms of assembly, the RNAP catalytic core consists of 2 alpha, 1 beta, 1 beta' and 1 omega subunit. When a sigma factor is associated with the core the holoenzyme is formed, which can initiate transcription.

It catalyses the reaction RNA(n) + a ribonucleoside 5'-triphosphate = RNA(n+1) + diphosphate. Its function is as follows. DNA-dependent RNA polymerase catalyzes the transcription of DNA into RNA using the four ribonucleoside triphosphates as substrates. This chain is DNA-directed RNA polymerase subunit beta, found in Mycoplasma capricolum subsp. capricolum (strain California kid / ATCC 27343 / NCTC 10154).